The following is a 120-amino-acid chain: NAD(P)H-quinone oxidoreductase subunit 3, chloroplastic (120 aa).

Transmembrane regions (helical) follow at residues 9–29 (IFWAFLIISSAIPVLAFLISG), 64–84 (MFALVFVVFDVETVFLYPWAM), and 88–108 (VLGVSAFIEAFIFVLILILGL).

This sequence belongs to the complex I subunit 3 family. In terms of assembly, NDH is composed of at least 16 different subunits, 5 of which are encoded in the nucleus.

It is found in the plastid. Its subcellular location is the chloroplast thylakoid membrane. The catalysed reaction is a plastoquinone + NADH + (n+1) H(+)(in) = a plastoquinol + NAD(+) + n H(+)(out). It carries out the reaction a plastoquinone + NADPH + (n+1) H(+)(in) = a plastoquinol + NADP(+) + n H(+)(out). In terms of biological role, NDH shuttles electrons from NAD(P)H:plastoquinone, via FMN and iron-sulfur (Fe-S) centers, to quinones in the photosynthetic chain and possibly in a chloroplast respiratory chain. The immediate electron acceptor for the enzyme in this species is believed to be plastoquinone. Couples the redox reaction to proton translocation, and thus conserves the redox energy in a proton gradient. This Capsella bursa-pastoris (Shepherd's purse) protein is NAD(P)H-quinone oxidoreductase subunit 3, chloroplastic.